The chain runs to 382 residues: uncharacterized protein (382 aa).

Helical transmembrane passes span 8 to 28 (VMLLLCGLLLLTLAIAVLNTL), 45 to 65 (MVSSSYFTGNLVGTLFTGYLI), 75 to 95 (YLASLIFAAGCVGLGGMVGFW), 102 to 122 (FIAGIGCAMIWVVVESALMCS), 131 to 151 (LLAAYMMAYYMGTFLGQLLVS), 157 to 177 (LLHVLPWVTGMILAGILPLLF), 204 to 224 (LGVNGCIISGIVLGSLYGLMP), 231 to 251 (GMANASIGFWMAVLVSAGILG), 270 to 290 (VQVFVVILGSIAMLTQAAMAP), 291 to 311 (ALFILGAAGFTLYPVAMAWAC), 325 to 345 (ALLLSYTVGSLLGPSFAAMLM), and 349 to 369 (SDNLLFIMIASVSFIYLLMLL).

This sequence belongs to the major facilitator superfamily. YcaD (TC 2.A.1.26) family.

The protein resides in the cell inner membrane. This is an uncharacterized protein from Salmonella dublin (strain CT_02021853).